The chain runs to 217 residues: Phosphatidylinositol phosphate synthase (217 aa).

The next 2 helical transmembrane spans lie at 28–49 and 55–74; these read LTPD…LTLF and FAGA…DGAM. 31-34 lines the a CDP-1,2-diacyl-sn-glycerol pocket; that stretch reads DVVT. Positions 68 and 71 each coordinate Mg(2+). Residues G72, R76, and T82 each coordinate a CDP-1,2-diacyl-sn-glycerol. Mg(2+)-binding residues include D89 and D93. Catalysis depends on D93, which acts as the Proton acceptor. Helical transmembrane passes span 95–112, 118–136, 156–173, and 179–200; these read ISDG…AFHM, VIAT…YIKA, LIIV…FVPW, and VGMW…HTVW.

The protein belongs to the CDP-alcohol phosphatidyltransferase class-I family. Homodimer. It depends on Mg(2+) as a cofactor.

It is found in the cell membrane. It catalyses the reaction a CDP-1,2-diacyl-sn-glycerol + 1D-myo-inositol 3-phosphate = a 1,2-diacyl-sn-glycero-3-phospho-(1D-myo-inositol-3-phosphate) + CMP + H(+). The catalysed reaction is 1,2-di-(9Z-octadecenoyl)-sn-glycero-3-cytidine-5'-diphosphate + 1D-myo-inositol 3-phosphate = 1,2-di-(9Z-octadecenoyl)-sn-glycero-3-phospho-(1D-myo-inositol-3-phosphate) + CMP + H(+). It participates in phospholipid metabolism; phosphatidylinositol phosphate biosynthesis. Its activity is regulated as follows. Competitively inhibited by several inositol 1-phosphate analogs, including the phosphonate analog 1-deoxy-1-phosphonomethyl-myo-inositol (Ino-C-P). Functionally, catalyzes the conjugation of the 1'-hydroxyl group of D-myo-inositol-3-phosphate (also named L-myo-inositol-1-phosphate) with a lipid tail of cytidine diphosphate diacylglycerol (CDP-DAG), forming phosphatidylinositol phosphate (PIP) and CMP. PIP is a precursor of phosphatidylinositol (PI) which is an essential lipid for mycobacteria required for formation of their cell wall. This Mycobacterium bovis (strain BCG / Pasteur 1173P2) protein is Phosphatidylinositol phosphate synthase.